The sequence spans 251 residues: UPF0309 protein SAV_3856 (251 aa).

The region spanning 36-220 (IADTVADGGR…AGTLADRGIE (185 aa)) is the SIS domain.

It belongs to the UPF0309 family.

This chain is UPF0309 protein SAV_3856, found in Streptomyces avermitilis (strain ATCC 31267 / DSM 46492 / JCM 5070 / NBRC 14893 / NCIMB 12804 / NRRL 8165 / MA-4680).